The chain runs to 367 residues: MKNLFLFCRAGYEKECAAEIQQRAAEMNVGGFVKTTNNDAYVIYQCFEDDGADTLAKMLPLNSLIFARQMFAASELHSDLPEQDRVGPLVASLLEADVTKCGELRVETPDTNEAKELSAFCRKFTVPLRQGLKKVGVLLDKENGRRPIIHVCFVGPGKAYVGYSLSNNSSPHFMGIPRLRMAADAPSRSSLKLDEAFGAFLTKEEQEMRCRSGLKAVDLGACPGGWTYQLVRRGMMVAAVDNGPMDEKLMETGQVKHYRADGFRFEPPRKNIYWLVCDMVEKPSRVAELMEAWAINGWFKEAIFNLKLPMKSRYKEVRVILDTMGEIFKENEIDYRLQCKHLYHDRDEVTVHLWIFPEKGVSYAEMG.

Residues S189, 222–225 (CPGG), D241, D261, and D278 each bind S-adenosyl-L-methionine. K307 serves as the catalytic Proton acceptor.

The protein belongs to the class I-like SAM-binding methyltransferase superfamily. RNA methyltransferase RlmE family. RlmM subfamily. In terms of assembly, monomer.

It localises to the cytoplasm. The catalysed reaction is cytidine(2498) in 23S rRNA + S-adenosyl-L-methionine = 2'-O-methylcytidine(2498) in 23S rRNA + S-adenosyl-L-homocysteine + H(+). In terms of biological role, catalyzes the 2'-O-methylation at nucleotide C2498 in 23S rRNA. In Shewanella denitrificans (strain OS217 / ATCC BAA-1090 / DSM 15013), this protein is Ribosomal RNA large subunit methyltransferase M.